The following is a 684-amino-acid chain: Frizzled-8 (684 aa).

The signal sequence occupies residues 1–27; it reads MEWGYLLEVTSLLAALAVLQRSSGAAA. At 28–271 the chain is on the extracellular side; the sequence is ASAKELACQE…NPFFSQDERA (244 aa). Positions 30 to 151 constitute an FZ domain; sequence AKELACQEIT…GNPDTLCMDY (122 aa). 5 disulfide bridges follow: Cys-35–Cys-96, Cys-43–Cys-89, Cys-80–Cys-118, Cys-107–Cys-148, and Cys-111–Cys-135. Asn-49 is a glycosylation site (N-linked (GlcNAc...) asparagine). Hexadecanoate is bound at residue 71-78; the sequence is QFWPLVEI. The interval 95–100 is wnt-binding; it reads ICLEDY. Residues 147–152 are wnt-binding; it reads LCMDYN. Asn-152 carries N-linked (GlcNAc...) asparagine glycosylation. A disordered region spans residues 155 to 222; the sequence is DLTTAAPSPP…KARPPGGGAA (68 aa). Residues 161–175 show a composition bias toward pro residues; that stretch reads PSPPRRLPPPQPGEQ. 2 stretches are compositionally biased toward low complexity: residues 176–186 and 199–222; these read PPSGSGHSRPP and GSGD…GGAA. Residues 272–292 form a helical membrane-spanning segment; it reads FTVFWIGLWSVLCFVSTFATV. Residues 293 to 308 are Cytoplasmic-facing; that stretch reads STFLIDMERFKYPERP. A helical membrane pass occupies residues 309-329; that stretch reads IIFLSACYLFVSVGYLVRLVA. Residues 330–393 lie on the Extracellular side of the membrane; that stretch reads GHEKVACSGG…RYETTGPALC (64 aa). Residues 394–414 traverse the membrane as a helical segment; that stretch reads TVVFLLVYFFGMASSIWWVIL. Over 415-436 the chain is Cytoplasmic; it reads SLTWFLAAGMKWGNEAIAGYSQ. The helical transmembrane segment at 437 to 457 threads the bilayer; sequence YFHLAAWLVPSVKSIAVLALS. The Extracellular segment spans residues 458-480; it reads SVDGDPVAGICYVGNQSLDNLRG. Asn-472 carries N-linked (GlcNAc...) asparagine glycosylation. The chain crosses the membrane as a helical span at residues 481 to 501; it reads FVLAPLVIYLFIGTMFLLAGF. Topologically, residues 502 to 529 are cytoplasmic; that stretch reads VSLFRIRSVIKQQGGPTKTHKLEKLMIR. A helical membrane pass occupies residues 530–550; it reads LGLFTVLYTVPAAVVVACLFY. The Extracellular segment spans residues 551–581; it reads EQHNRPRWEATHNCPCLRDLQPDQARRPDYA. Residues 582 to 602 traverse the membrane as a helical segment; that stretch reads VFMLKYFMCLVVGITSGVWVW. Residues 603–684 are Cytoplasmic-facing; sequence SGKTLESWRA…YPKQMPLSQV (82 aa). Positions 605-610 match the Lys-Thr-X-X-X-Trp motif, mediates interaction with the PDZ domain of Dvl family members motif; the sequence is KTLESW. The span at 630–654 shows a compositional bias: gly residues; the sequence is AGGSGPGGGGPGPGGGGGHGGGGGS. The tract at residues 630–655 is disordered; it reads AGGSGPGGGGPGPGGGGGHGGGGGSL. Positions 682–684 match the PDZ-binding motif; that stretch reads SQV.

The protein belongs to the G-protein coupled receptor Fz/Smo family. As to quaternary structure, component of a Wnt-signaling complex that contains a WNT protein, a FZD protein and LRP5 or LRP6. Interacts directly with LRP5 or LRP6; the interaction is promoted by Wnt-binding and signaling and inhibited by DKK1. Interacts (via the PDZ-binding motif) with GPOC (via its PDZ domain). Interacts with RSPO1 and RSPO3. Interacts with glypican GPC3. Post-translationally, ubiquitinated by ZNRF3, leading to its degradation by the proteasome.

It is found in the membrane. The protein resides in the golgi apparatus. Its subcellular location is the cell membrane. In terms of biological role, receptor for Wnt proteins. Component of the Wnt-Fzd-LRP5-LRP6 complex that triggers beta-catenin signaling through inducing aggregation of receptor-ligand complexes into ribosome-sized signalosomes. The beta-catenin canonical signaling pathway leads to the activation of disheveled proteins, inhibition of GSK-3 kinase, nuclear accumulation of beta-catenin and activation of Wnt target genes. A second signaling pathway involving PKC and calcium fluxes has been seen for some family members, but it is not yet clear if it represents a distinct pathway or if it can be integrated in the canonical pathway, as PKC seems to be required for Wnt-mediated inactivation of GSK-3 kinase. Both pathways seem to involve interactions with G-proteins. May be involved in transduction and intercellular transmission of polarity information during tissue morphogenesis and/or in differentiated tissues. Coreceptor along with RYK of Wnt proteins, such as WNT1. The sequence is that of Frizzled-8 (Fzd8) from Rattus norvegicus (Rat).